Consider the following 254-residue polypeptide: Glutathione S-transferase U12 (254 aa).

Residues 19–23 (KKRKK) carry the Nuclear localization signal motif. One can recognise a GST N-terminal domain in the interval 33-114 (TTVKLIGTWA…YVDESWPSDL (82 aa)). Residues 43-44 (SP), 71-72 (GK), 85-86 (KV), and 98-99 (ES) contribute to the glutathione site. In terms of domain architecture, GST C-terminal spans 120–252 (LPSERAFARF…EFIEFAKKKF (133 aa)).

It belongs to the GST superfamily. Tau family.

It is found in the nucleus. It carries out the reaction RX + glutathione = an S-substituted glutathione + a halide anion + H(+). Its function is as follows. May be involved in the conjugation of reduced glutathione to a wide number of exogenous and endogenous hydrophobic electrophiles and have a detoxification role against certain herbicides. This chain is Glutathione S-transferase U12 (GSTU12), found in Arabidopsis thaliana (Mouse-ear cress).